Here is a 186-residue protein sequence, read N- to C-terminus: Large ribosomal subunit protein uL22 (186 aa).

The tract at residues 159–186 is disordered; sequence KATDEEPTKKKLSKKKLQRQKEKMMRSE. The span at 177–186 shows a compositional bias: basic and acidic residues; sequence RQKEKMMRSE.

Belongs to the universal ribosomal protein uL22 family.

The polypeptide is Large ribosomal subunit protein uL22 (RpL17) (Phlebotomus papatasi (Sandfly)).